We begin with the raw amino-acid sequence, 644 residues long: Chaperone protein DnaK (644 aa).

T199 carries the phosphothreonine; by autocatalysis modification. A disordered region spans residues 605-644 (KKSSEGQAAQGQTQSQESTKPAEEGVVDAEFEEVKEEDKK). A compositionally biased stretch (polar residues) spans 609–623 (EGQAAQGQTQSQEST). Acidic residues predominate over residues 629–644 (GVVDAEFEEVKEEDKK).

It belongs to the heat shock protein 70 family.

In terms of biological role, acts as a chaperone. This Legionella pneumophila subsp. pneumophila (strain Philadelphia 1 / ATCC 33152 / DSM 7513) protein is Chaperone protein DnaK.